The primary structure comprises 610 residues: Elongation factor 4 (610 aa).

A tr-type G domain is found at 11 to 193 (EKIRNFSIIA…QIVEKVPAPS (183 aa)). GTP is bound by residues 23–28 (DHGKST) and 140–143 (NKID).

This sequence belongs to the TRAFAC class translation factor GTPase superfamily. Classic translation factor GTPase family. LepA subfamily.

It localises to the cell membrane. The catalysed reaction is GTP + H2O = GDP + phosphate + H(+). In terms of biological role, required for accurate and efficient protein synthesis under certain stress conditions. May act as a fidelity factor of the translation reaction, by catalyzing a one-codon backward translocation of tRNAs on improperly translocated ribosomes. Back-translocation proceeds from a post-translocation (POST) complex to a pre-translocation (PRE) complex, thus giving elongation factor G a second chance to translocate the tRNAs correctly. Binds to ribosomes in a GTP-dependent manner. This Streptococcus uberis (strain ATCC BAA-854 / 0140J) protein is Elongation factor 4.